Reading from the N-terminus, the 214-residue chain is RNA pyrophosphohydrolase (214 aa).

In terms of domain architecture, Nudix hydrolase spans 6 to 149; that stretch reads GFRPNVGIIL…KRDVYQLALT (144 aa). The Nudix box signature appears at 38–59; that stretch reads GGIKYGETPMQAMYRELHEETG.

The protein belongs to the Nudix hydrolase family. RppH subfamily. It depends on a divalent metal cation as a cofactor.

Accelerates the degradation of transcripts by removing pyrophosphate from the 5'-end of triphosphorylated RNA, leading to a more labile monophosphorylated state that can stimulate subsequent ribonuclease cleavage. This chain is RNA pyrophosphohydrolase, found in Burkholderia cenocepacia (strain ATCC BAA-245 / DSM 16553 / LMG 16656 / NCTC 13227 / J2315 / CF5610) (Burkholderia cepacia (strain J2315)).